A 284-amino-acid polypeptide reads, in one-letter code: Prestalk D11 protein (284 aa).

The signal sequence occupies residues 1–25 (MLNKLILLLILSSCLVLSVKSEVNV). One copy of the A-1 repeat lies at 25-64 (VDCSLVRCAQPICKPHYRLNMTDSCCGRCEPCTDVACTLQ). The stretch at 65–82 (VKYCQDGEVPTGCCPCTL) is one B-1 repeat. An A-2 repeat occupies 88 to 126 (DCSLVKCARPVCKPYYRLNMTDSCCGRCEPCTGVACTLQ). Residues 127–144 (IKYCKDGEVPTGCCPCTP) form a B-2 repeat. The stretch at 145–159 (QPTKKPDCSKVPCPK) is one C-1 repeat. The B-3 repeat unit spans residues 161-178 (LKYCQEGELPTGCCPCTP). Residues 179–193 (QPTKKPDCSRVPCPK) form a C-2 repeat. Residues 195 to 212 (LKYCKEGELPTGCCPCTP) form a B-4 repeat. Residues 213–228 (QPTKKPDCSDVMCTMD) form a C-3 repeat. The B-5 repeat unit spans residues 229–246 (IRYCKNGELPTGCCPCTP). The C-4 repeat unit spans residues 247–262 (QETKVPDCSKAMCTMD). The stretch at 263–278 (IKYCKPGEKPFGCCPC) is one B-6 repeat.

The sequence is that of Prestalk D11 protein (ampA) from Dictyostelium discoideum (Social amoeba).